A 530-amino-acid chain; its full sequence is Cytochrome P450 monooxygenase ausG (530 aa).

A helical transmembrane segment spans residues 31–51 (LLVAYRLPGLLLLFSITIILF). Residue cysteine 470 coordinates heme.

This sequence belongs to the cytochrome P450 family. Heme serves as cofactor.

It is found in the membrane. Its pathway is secondary metabolite biosynthesis; terpenoid biosynthesis. In terms of biological role, cytochrome P450 monooxygenase; part of the gene cluster B that mediates the biosynthesis of the fungal meroterpenoid acetoxydehydroaustin. The first step of the pathway is the synthesis of 3,5-dimethylorsellinic acid by the polyketide synthase ausA. 3,5-dimethylorsellinic acid is then prenylated by the polyprenyl transferase ausN. Further epoxidation by the FAD-dependent monooxygenase ausM and cyclization by the probable terpene cyclase ausL lead to the formation of protoaustinoid A. Protoaustinoid A is then oxidized to spiro-lactone preaustinoid A3 by the combined action of the FAD-binding monooxygenases ausB and ausC, and the dioxygenase ausE. Acid-catalyzed keto-rearrangement and ring contraction of the tetraketide portion of preaustinoid A3 by ausJ lead to the formation of preaustinoid A4. The aldo-keto reductase ausK, with the help of ausH, is involved in the next step by transforming preaustinoid A4 into isoaustinone which is in turn hydroxylated by the P450 monooxygenase ausI to form austinolide. The cytochrome P450 monooxygenase ausG then modifies austinolide to austinol. Austinol is further acetylated to austin by the O-acetyltransferase ausP, which spontaneously changes to dehydroaustin. The cytochrome P450 monooxygenase then converts dehydroaustin is into 7-dehydrodehydroaustin. The hydroxylation catalyzed by ausR permits the second O-acetyltransferase ausQ to add an additional acetyl group to the molecule, leading to the formation of acetoxydehydroaustin. Due to genetic rearrangements of the clusters and the subsequent loss of some enzymes, the end product of the Penicillium brasilianum austinoid biosynthesis clusters is acetoxydehydroaustin. The chain is Cytochrome P450 monooxygenase ausG from Penicillium brasilianum.